The following is a 422-amino-acid chain: NADH-quinone oxidoreductase subunit D 1 (422 aa).

Belongs to the complex I 49 kDa subunit family. NDH-1 is composed of 14 different subunits. Subunits NuoB, C, D, E, F, and G constitute the peripheral sector of the complex.

It localises to the cell membrane. The enzyme catalyses a quinone + NADH + 5 H(+)(in) = a quinol + NAD(+) + 4 H(+)(out). NDH-1 shuttles electrons from NADH, via FMN and iron-sulfur (Fe-S) centers, to quinones in the respiratory chain. The immediate electron acceptor for the enzyme in this species is believed to be ubiquinone. Couples the redox reaction to proton translocation (for every two electrons transferred, four hydrogen ions are translocated across the cytoplasmic membrane), and thus conserves the redox energy in a proton gradient. The protein is NADH-quinone oxidoreductase subunit D 1 of Herpetosiphon aurantiacus (strain ATCC 23779 / DSM 785 / 114-95).